The primary structure comprises 328 residues: Beta-ketoacyl-[acyl-carrier-protein] synthase III (328 aa).

Catalysis depends on residues C122 and H255. An ACP-binding region spans residues 256–260 (QANIR). N285 is a catalytic residue.

It belongs to the thiolase-like superfamily. FabH family. Homodimer.

It localises to the cytoplasm. It catalyses the reaction malonyl-[ACP] + acetyl-CoA + H(+) = 3-oxobutanoyl-[ACP] + CO2 + CoA. Its pathway is lipid metabolism; fatty acid biosynthesis. Functionally, catalyzes the condensation reaction of fatty acid synthesis by the addition to an acyl acceptor of two carbons from malonyl-ACP. Catalyzes the first condensation reaction which initiates fatty acid synthesis and may therefore play a role in governing the total rate of fatty acid production. Possesses both acetoacetyl-ACP synthase and acetyl transacylase activities. Its substrate specificity determines the biosynthesis of branched-chain and/or straight-chain of fatty acids. This is Beta-ketoacyl-[acyl-carrier-protein] synthase III from Herminiimonas arsenicoxydans.